The following is a 104-amino-acid chain: Large ribosomal subunit protein bL21 (104 aa).

This sequence belongs to the bacterial ribosomal protein bL21 family. Part of the 50S ribosomal subunit. Contacts protein L20.

Its function is as follows. This protein binds to 23S rRNA in the presence of protein L20. The chain is Large ribosomal subunit protein bL21 from Opitutus terrae (strain DSM 11246 / JCM 15787 / PB90-1).